The primary structure comprises 421 residues: Serine hydroxymethyltransferase (421 aa).

Residues Leu-121 and 125 to 127 (GHL) contribute to the (6S)-5,6,7,8-tetrahydrofolate site. At Lys-229 the chain carries N6-(pyridoxal phosphate)lysine.

It belongs to the SHMT family. Homodimer. Pyridoxal 5'-phosphate serves as cofactor.

It is found in the cytoplasm. The catalysed reaction is (6R)-5,10-methylene-5,6,7,8-tetrahydrofolate + glycine + H2O = (6S)-5,6,7,8-tetrahydrofolate + L-serine. Its pathway is one-carbon metabolism; tetrahydrofolate interconversion. It participates in amino-acid biosynthesis; glycine biosynthesis; glycine from L-serine: step 1/1. Catalyzes the reversible interconversion of serine and glycine with tetrahydrofolate (THF) serving as the one-carbon carrier. This reaction serves as the major source of one-carbon groups required for the biosynthesis of purines, thymidylate, methionine, and other important biomolecules. Also exhibits THF-independent aldolase activity toward beta-hydroxyamino acids, producing glycine and aldehydes, via a retro-aldol mechanism. In Haemophilus influenzae (strain ATCC 51907 / DSM 11121 / KW20 / Rd), this protein is Serine hydroxymethyltransferase.